Consider the following 178-residue polypeptide: CDP-archaeol synthase (178 aa).

4 helical membrane passes run 3–23, 56–76, 91–111, and 136–156; these read LLLL…ANAV, FFGI…VILY, IILS…GSFI, and LLFA…LLVI.

It belongs to the CDP-archaeol synthase family. Requires Mg(2+) as cofactor.

The protein localises to the cell membrane. It catalyses the reaction 2,3-bis-O-(geranylgeranyl)-sn-glycerol 1-phosphate + CTP + H(+) = CDP-2,3-bis-O-(geranylgeranyl)-sn-glycerol + diphosphate. Its pathway is membrane lipid metabolism; glycerophospholipid metabolism. Functionally, catalyzes the formation of CDP-2,3-bis-(O-geranylgeranyl)-sn-glycerol (CDP-archaeol) from 2,3-bis-(O-geranylgeranyl)-sn-glycerol 1-phosphate (DGGGP) and CTP. This reaction is the third ether-bond-formation step in the biosynthesis of archaeal membrane lipids. This chain is CDP-archaeol synthase, found in Methanococcus maripaludis (strain C5 / ATCC BAA-1333).